We begin with the raw amino-acid sequence, 880 residues long: GAS2-like protein 2 (880 aa).

The Calponin-homology (CH) domain maps to 32–159; sequence EAMKEDLAEW…CLLELGRRAW (128 aa). The tract at residues 180–200 is disordered; that stretch reads RRELALPPPDPSPPAPPRRQP. Residues 185–198 are compositionally biased toward pro residues; that stretch reads LPPPDPSPPAPPRR. Positions 201–273 constitute a GAR domain; the sequence is CHFRNLDQMV…HYLDKHDPCR (73 aa). Disordered stretches follow at residues 283 to 360, 372 to 437, 489 to 533, and 676 to 880; these read SFLK…MAPF, WRQP…NPTP, ESVR…ELGR, and APTG…ESWV. Over residues 301 to 315 the composition is skewed to polar residues; that stretch reads GPSQTQPTMTISRSQ. Residues 438–880 form an interaction with ADORA2A region; sequence QRLRAIEATT…PLPPEEESWV (443 aa). The segment covering 506 to 515 has biased composition (pro residues); sequence RLPPARPPTP. Residues 725–734 are compositionally biased toward polar residues; it reads QDCSASTVSA. Composition is skewed to basic residues over residues 757–767 and 774–785; these read KGRRTLRKPKR and LKLRPRIRPRRD.

This sequence belongs to the GAS2 family. As to quaternary structure, interacts with ADORA2A (via its cytoplasmic C-terminal domain). Interacts with GNAS, GNAL, GNAQ, and GNA13. Interacts with MAPRE1. As to expression, expressed in bronchial and nasal epithelial cells (at protein level). Expressed in brain, kidney, lung, testis, fallopian tubes, and skeletal muscle. Expressed at low levels in stomach and colon.

The protein localises to the cytoplasm. Its subcellular location is the cytoskeleton. The protein resides in the cell membrane. It localises to the stress fiber. It is found in the cilium basal body. In terms of biological role, involved in the cross-linking of microtubules and microfilaments. Regulates microtubule dynamics and stability by interacting with microtubule plus-end tracking proteins, such as MAPRE1, to regulate microtubule growth along actin stress fibers. Enhances ADORA2-mediated adenylyl cyclase activation by acting as a scaffold to recruit trimeric G-protein complexes to ADORA2A. Regulates ciliary orientation and performance in cells located in the airway. The protein is GAS2-like protein 2 (GAS2L2) of Homo sapiens (Human).